We begin with the raw amino-acid sequence, 157 residues long: Capsid protein (157 aa).

Residue Ala-2 is modified to N-acetylalanine; by host.

The protein belongs to the virgaviridae capsid protein family.

It is found in the virion. In terms of biological role, capsid protein self-assembles to form rod-shaped virions about 18 nm in diameter with a central canal enclosing the viral genomic RNA. The protein is Capsid protein (CP) of Vicia faba (Broad bean).